The following is a 475-amino-acid chain: tRNA-2-methylthio-N(6)-dimethylallyladenosine synthase (475 aa).

One can recognise an MTTase N-terminal domain in the interval 2–119 (AKLHITTWGC…LPEMINKIRG (118 aa)). [4Fe-4S] cluster is bound by residues C11, C48, C82, C156, C160, and C163. Residues 142–374 (RAEGPTAFVS…QQRINHQAMQ (233 aa)) enclose the Radical SAM core domain. The TRAM domain occupies 377 to 440 (RAMLGTEQRV…TNSLRGEVVR (64 aa)).

It belongs to the methylthiotransferase family. MiaB subfamily. Monomer. The cofactor is [4Fe-4S] cluster.

Its subcellular location is the cytoplasm. It carries out the reaction N(6)-dimethylallyladenosine(37) in tRNA + (sulfur carrier)-SH + AH2 + 2 S-adenosyl-L-methionine = 2-methylsulfanyl-N(6)-dimethylallyladenosine(37) in tRNA + (sulfur carrier)-H + 5'-deoxyadenosine + L-methionine + A + S-adenosyl-L-homocysteine + 2 H(+). Catalyzes the methylthiolation of N6-(dimethylallyl)adenosine (i(6)A), leading to the formation of 2-methylthio-N6-(dimethylallyl)adenosine (ms(2)i(6)A) at position 37 in tRNAs that read codons beginning with uridine. The protein is tRNA-2-methylthio-N(6)-dimethylallyladenosine synthase of Actinobacillus pleuropneumoniae serotype 3 (strain JL03).